The sequence spans 245 residues: Probable phosphatase YcdX (245 aa).

Residues histidine 7, histidine 9, histidine 15, histidine 40, glutamate 73, histidine 101, histidine 131, aspartate 192, and histidine 194 each coordinate Zn(2+).

This sequence belongs to the PHP family. In terms of assembly, homotrimer. The cofactor is Zn(2+).

The sequence is that of Probable phosphatase YcdX from Shigella dysenteriae serotype 1 (strain Sd197).